The primary structure comprises 371 residues: Transcription termination/antitermination protein NusA (371 aa).

The 65-residue stretch at 135–199 (EDIMTGIVQR…KGPQIYVSRT (65 aa)) folds into the S1 motif domain. The KH domain maps to 301–367 (EKATTVIVPD…EPLFTEPETA (67 aa)). The interval 347 to 371 (GIYPRELEEDDEPLFTEPETAESDE) is disordered. Acidic residues predominate over residues 353-371 (LEEDDEPLFTEPETAESDE).

It belongs to the NusA family. Monomer. Binds directly to the core enzyme of the DNA-dependent RNA polymerase and to nascent RNA.

The protein localises to the cytoplasm. Its function is as follows. Participates in both transcription termination and antitermination. This Bacillus subtilis (strain 168) protein is Transcription termination/antitermination protein NusA.